A 453-amino-acid chain; its full sequence is MKKCSYDYKLNNVNDPNFYKDIFPYEEVPKIVFNNIQLPMDLPDNIYITDTTFRDGQQSMPPYTSREIVRIFDYLHELDNNSGIIKQTEFFLYTKKDRKAAEVCMERGYEFPEVTSWIRADKEDLKLVKDMGIKETGMLMSCSDYHIFKKLKMTRKETMDMYLDLAREALNNGIRPRCHLEDITRADFYGFVVPFVNELMKMSKEANIPIKIRACDTLGLGVPYNGVEIPRSVQGIIHGLRNICEVPSESIEWHGHNDFYGVVTNSSTAWLYGASSINTSFLGIGERTGNCPLEAMIFEYAQIKGNTKNMKLHVITELAQYFEKEIKYSVPVRTPFVGTDFNVTRAGIHADGILKDEEIYNIFDTDKILGRPVVVAVSQYSGRAGIAAWVNTYYRLKDEDKVNKNDSRIDQIKMWVDEQYRAGRTSVIGNNELELLVSKVMPEVIEKTEERAS.

The Pyruvate carboxyltransferase domain occupies 46–316 (IYITDTTFRD…TKNMKLHVIT (271 aa)).

The protein belongs to the alpha-IPM synthase/homocitrate synthase family. Mn(2+) serves as cofactor. Requires Co(2+) as cofactor. It depends on Mg(2+) as a cofactor.

The catalysed reaction is oxaloacetate + acetyl-CoA + H2O = citrate + CoA + H(+). Inhibited by p-chloromercuribenzoate (pCMB), EDTA, Zn(2+) ions, and under aerobic conditions. Catalyzes the condensation of the acetyl group of acetyl-CoA with oxaloacetate to form citrate. This enzyme is highly Re-face stereospecific with respect to the C-2 of oxaloacetate. This is Citrate (Re)-synthase from Clostridium kluyveri (strain ATCC 8527 / DSM 555 / NBRC 12016 / NCIMB 10680 / K1).